Consider the following 301-residue polypeptide: UDP-N-acetylenolpyruvoylglucosamine reductase (301 aa).

The 167-residue stretch at 24–190 folds into the FAD-binding PCMH-type domain; it reads RVGGLAQFYD…VSAQLQLQPG (167 aa). Arg-169 is an active-site residue. The active-site Proton donor is Ser-220. Residue Glu-290 is part of the active site.

Belongs to the MurB family. FAD serves as cofactor.

Its subcellular location is the cytoplasm. It catalyses the reaction UDP-N-acetyl-alpha-D-muramate + NADP(+) = UDP-N-acetyl-3-O-(1-carboxyvinyl)-alpha-D-glucosamine + NADPH + H(+). Its pathway is cell wall biogenesis; peptidoglycan biosynthesis. Functionally, cell wall formation. The protein is UDP-N-acetylenolpyruvoylglucosamine reductase of Synechococcus sp. (strain ATCC 27144 / PCC 6301 / SAUG 1402/1) (Anacystis nidulans).